Here is a 292-residue protein sequence, read N- to C-terminus: 33 kDa chaperonin (292 aa).

2 cysteine pairs are disulfide-bonded: Cys230–Cys232 and Cys263–Cys266.

This sequence belongs to the HSP33 family. Under oxidizing conditions two disulfide bonds are formed involving the reactive cysteines. Under reducing conditions zinc is bound to the reactive cysteines and the protein is inactive.

The protein resides in the cytoplasm. In terms of biological role, redox regulated molecular chaperone. Protects both thermally unfolding and oxidatively damaged proteins from irreversible aggregation. Plays an important role in the bacterial defense system toward oxidative stress. The protein is 33 kDa chaperonin of Serratia proteamaculans (strain 568).